The following is a 264-amino-acid chain: Phosphonoacetaldehyde hydrolase (264 aa).

The active-site Nucleophile is D9. 2 residues coordinate Mg(2+): D9 and A11. K50 serves as the catalytic Schiff-base intermediate with substrate. D183 provides a ligand contact to Mg(2+).

Belongs to the HAD-like hydrolase superfamily. PhnX family. Homodimer. Mg(2+) serves as cofactor.

The catalysed reaction is phosphonoacetaldehyde + H2O = acetaldehyde + phosphate + H(+). Functionally, involved in phosphonate degradation. The chain is Phosphonoacetaldehyde hydrolase from Bacillus cereus (strain AH187).